A 353-amino-acid polypeptide reads, in one-letter code: Uroporphyrinogen decarboxylase (353 aa).

Residues 33 to 37 (RQAGR), Asp-82, Tyr-158, Ser-213, and His-332 each bind substrate.

The protein belongs to the uroporphyrinogen decarboxylase family. In terms of assembly, homodimer.

The protein localises to the cytoplasm. The enzyme catalyses uroporphyrinogen III + 4 H(+) = coproporphyrinogen III + 4 CO2. It functions in the pathway porphyrin-containing compound metabolism; protoporphyrin-IX biosynthesis; coproporphyrinogen-III from 5-aminolevulinate: step 4/4. Functionally, catalyzes the decarboxylation of four acetate groups of uroporphyrinogen-III to yield coproporphyrinogen-III. This is Uroporphyrinogen decarboxylase from Gluconobacter oxydans (strain 621H) (Gluconobacter suboxydans).